The sequence spans 148 residues: Cathelicidin-1 (148 aa).

The N-terminal stretch at 1 to 17 (MLSCWVLLLALLGGACA) is a signal peptide. A propeptide spanning residues 18–122 (LPAPLGYSQA…TCVDSMADPV (105 aa)) is cleaved from the precursor. 2 disulfides stabilise this stretch: Cys-75–Cys-86 and Cys-97–Cys-114.

It belongs to the cathelicidin family. Detected in gizzard, liver, small intestine, large intestine, cloaca, bursa of Fabricius, gall bladder, lung, trachea, kidney, testis and bone marrow.

It localises to the secreted. In terms of biological role, binds bacterial lipopolysaccharide (LPS). Has potent antimicrobial activity against Gram-positive and Gram-negative bacteria (in vitro). Has hemolytic activity (in vitro). May play a role in the innate immune response. The polypeptide is Cathelicidin-1 (CATHL1) (Gallus gallus (Chicken)).